A 165-amino-acid polypeptide reads, in one-letter code: Transcriptional repressor NrdR (165 aa).

Residues 3–34 (CPYCGQLNNRVVDSRLSRSEFAVRRRRECLDC) fold into a zinc finger. The 91-residue stretch at 49-139 (VMVVKKDGRR…VYREFKDVDD (91 aa)) folds into the ATP-cone domain.

It belongs to the NrdR family. The cofactor is Zn(2+).

In terms of biological role, negatively regulates transcription of bacterial ribonucleotide reductase nrd genes and operons by binding to NrdR-boxes. This chain is Transcriptional repressor NrdR, found in Desulforapulum autotrophicum (strain ATCC 43914 / DSM 3382 / VKM B-1955 / HRM2) (Desulfobacterium autotrophicum).